The primary structure comprises 189 residues: Apolipophorin-3 (189 aa).

Positions 1-18 (MAAKFVVVLAACVALSHS) are cleaved as a signal peptide. A propeptide spanning residues 19–23 (AMVRR) is cleaved from the precursor.

It belongs to the insect apolipophorin-3 family. Equilibrium between a soluble monomer and a bound lipoprotein form. Apolipophorin-3 associates with lipophorin during lipid loading until each particle contains 9 or 14 molecules of apolipophorin-3. Hemolymph.

It localises to the secreted. In terms of biological role, assists in the loading of diacylglycerol, generated from triacylglycerol stores in the fat body through the action of adipokinetic hormone, into lipophorin, the hemolymph lipoprotein. It increases the lipid carrying capacity of lipophorin by covering the expanding hydrophobic surface resulting from diacylglycerol uptake. It thus plays a critical role in the transport of lipids during flight in several species of insects. The sequence is that of Apolipophorin-3 from Manduca sexta (Tobacco hawkmoth).